The primary structure comprises 357 residues: MNKPSIYGLTLEQMTEWLSHQGHKPFRAKQVWDWLYRKRVTTFAEMTNVNKDCLELLDQSFAIDSMTQAVKQESADGTIKFLFKLYDGSLIETVLMRHKYGLSVCVTTQVGCNIGCSFCASGLIKKSRDLSAGEIVEQIMNVQHHLDAVGKEERVSHVVVMGIGEPFDNFDNMVDFLNVIKDHNGLAIGARHITVSTSGLADKIYKFADLKLQVNLAISLHAPNNELRTQIMKINRAIPLEKLMPAIDYYVKTTNRKITIEYILLRGVNDQKAQAIELAKLFEDKRHLTYVNLIPYNPVDEHGQYQRSTSEDISTFYDTLKKNGLNCGVRLEHGTDIDAACGQLRSKQIKKDTVAAK.

E92 serves as the catalytic Proton acceptor. The region spanning 98-336 (HKYGLSVCVT…CGVRLEHGTD (239 aa)) is the Radical SAM core domain. Residues C105 and C341 are joined by a disulfide bond. Residues C112, C116, and C119 each contribute to the [4Fe-4S] cluster site. S-adenosyl-L-methionine-binding positions include 164-165 (GE), S196, 219-221 (SLH), and N297. The active-site S-methylcysteine intermediate is C341.

The protein belongs to the radical SAM superfamily. RlmN family. [4Fe-4S] cluster is required as a cofactor.

It is found in the cytoplasm. The catalysed reaction is adenosine(2503) in 23S rRNA + 2 reduced [2Fe-2S]-[ferredoxin] + 2 S-adenosyl-L-methionine = 2-methyladenosine(2503) in 23S rRNA + 5'-deoxyadenosine + L-methionine + 2 oxidized [2Fe-2S]-[ferredoxin] + S-adenosyl-L-homocysteine. It catalyses the reaction adenosine(37) in tRNA + 2 reduced [2Fe-2S]-[ferredoxin] + 2 S-adenosyl-L-methionine = 2-methyladenosine(37) in tRNA + 5'-deoxyadenosine + L-methionine + 2 oxidized [2Fe-2S]-[ferredoxin] + S-adenosyl-L-homocysteine. Specifically methylates position 2 of adenine 2503 in 23S rRNA and position 2 of adenine 37 in tRNAs. This is Probable dual-specificity RNA methyltransferase RlmN from Exiguobacterium sibiricum (strain DSM 17290 / CCUG 55495 / CIP 109462 / JCM 13490 / 255-15).